A 235-amino-acid polypeptide reads, in one-letter code: UPF0702 transmembrane protein YdfS (235 aa).

2 helical membrane-spanning segments follow: residues 32 to 52 and 60 to 80; these read MTIF…GLAY and NMAI…FLSI.

It belongs to the UPF0702 family.

The protein resides in the cell membrane. In Bacillus subtilis (strain 168), this protein is UPF0702 transmembrane protein YdfS (ydfS).